Consider the following 224-residue polypeptide: DNA mismatch repair protein MutH (224 aa).

This sequence belongs to the MutH family.

Its subcellular location is the cytoplasm. In terms of biological role, sequence-specific endonuclease that cleaves unmethylated GATC sequences. It is involved in DNA mismatch repair. This chain is DNA mismatch repair protein MutH, found in Histophilus somni (strain 129Pt) (Haemophilus somnus).